Consider the following 211-residue polypeptide: Troponin I, cardiac muscle (211 aa).

Positions 1–23 are disordered; it reads MADESGDAAGCPPPAPAPIRRQS. Ala2 carries the post-translational modification N-acetylalanine. Ser5 carries the phosphoserine modification. 2 positions are modified to phosphoserine; by PKA and PKD/PRKD1: Ser23 and Ser24. The residue at position 27 (Tyr27) is a Phosphotyrosine. Thr32 bears the Phosphothreonine; by STK4/MST1 mark. Residues 33–80 form an involved in binding TNC region; sequence EPHAKKKSKISASRKLQLKTLMLQIAKQELEREAEERRGEKGRALSTR. Phosphoserine; by PKC/PRKCE occurs at positions 43 and 45. Phosphothreonine; by STK4/MST1 is present on Thr52. Ser78 carries the phosphoserine modification. Thr79 carries the phosphothreonine modification. Phosphothreonine; by STK4/MST1 is present on residues Thr130 and Thr144. An involved in binding TNC and actin region spans residues 130–150; the sequence is TQKIFDLRGKFKRPTLRRVRI. Ser151 bears the Phosphoserine; by PAK3 mark. Ser167 carries the phosphoserine modification. Thr182 bears the Phosphothreonine mark. Phosphoserine is present on Ser200.

Belongs to the troponin I family. In terms of assembly, binds to actin and tropomyosin. Interacts with TRIM63. Interacts with STK4/MST1. Post-translationally, phosphorylated at Ser-23 and Ser-24 by PRKD1; phosphorylation reduces myofilament calcium sensitivity. Phosphorylated preferentially at Thr-32. Phosphorylation by STK4/MST1 alters its binding affinity to TNNC1 (cardiac Tn-C) and TNNT2 (cardiac Tn-T). Phosphorylated at Ser-43 and Ser-45 by PRKCE; phosphorylation increases myocardium contractile dysfunction.

Its function is as follows. Troponin I is the inhibitory subunit of troponin, the thin filament regulatory complex which confers calcium-sensitivity to striated muscle actomyosin ATPase activity. This is Troponin I, cardiac muscle (TNNI3) from Canis lupus familiaris (Dog).